A 264-amino-acid chain; its full sequence is Apolipoprotein A-I (264 aa).

The N-terminal stretch at methionine 1 to alanine 18 is a signal peptide. 2 repeat units span residues leucine 67 to alanine 88 and proline 89 to threonine 110. A 10 X approximate tandem repeats region spans residues leucine 67 to alanine 264. A 3; half-length repeat occupies lysine 111–arginine 121. 5 tandem repeats follow at residues proline 122 to threonine 143, proline 144 to threonine 165, proline 166 to alanine 187, proline 188 to isoleucine 209, and proline 210 to threonine 231. The stretch at proline 232–threonine 242 is one 9; half-length repeat. Copy 10 of the repeat occupies proline 243–alanine 264.

The protein belongs to the apolipoprotein A1/A4/E family. Homodimer. As to expression, major protein of plasma HDL, also found in chylomicrons.

It localises to the secreted. Functionally, participates in the reverse transport of cholesterol from tissues to the liver for excretion by promoting cholesterol efflux from tissues and by acting as a cofactor for the lecithin cholesterol acyltransferase (LCAT). The chain is Apolipoprotein A-I (APOA1) from Gallus gallus (Chicken).